The chain runs to 28 residues: Omega-conotoxin-like CnVIIH (28 aa).

Disulfide bonds link cysteine 1/cysteine 16, cysteine 8/cysteine 20, and cysteine 15/cysteine 27. Residue proline 7 is modified to 4-hydroxyproline; partial. The residue at position 12 (methionine 12) is a Methionine sulfoxide. Residue cysteine 27 is modified to Cysteine amide.

This sequence belongs to the conotoxin O1 superfamily. As to expression, expressed by the venom duct.

Its subcellular location is the secreted. In terms of biological role, omega-conotoxins act at presynaptic membranes, they bind and block voltage-gated calcium channels (Cav). This toxin blocks N-type calcium channels (Cav2.2/CACNA1B) with high potency. Unexpectedly, it does not show any blocking activity at amphibian neuromuscular junction. In vivo, when intracerebroventricularly injected into mice causes shaking activity, and, at higher doses, causes mild tremors. When injected intramuscularly into fish, it causes paralysis, and, at higher doses, causes death. The chain is Omega-conotoxin-like CnVIIH from Conus consors (Singed cone).